The following is a 393-amino-acid chain: S-adenosylmethionine synthase 2 (393 aa).

A Mg(2+)-binding site is contributed by glutamate 9. Residue histidine 15 participates in ATP binding. Residue glutamate 43 coordinates K(+). Residues glutamate 56 and glutamine 99 each coordinate L-methionine. ATP contacts are provided by residues 167–169 (DGK), 235–238 (SGRF), aspartate 246, 252–253 (RK), alanine 269, lysine 273, and lysine 277. Aspartate 246 is a binding site for L-methionine. Position 277 (lysine 277) interacts with L-methionine.

Belongs to the AdoMet synthase family. Homotetramer. Requires Mn(2+) as cofactor. It depends on Mg(2+) as a cofactor. Co(2+) serves as cofactor. K(+) is required as a cofactor. Mostly expressed in roots. Also present in stems and leaves.

It localises to the cytoplasm. It carries out the reaction L-methionine + ATP + H2O = S-adenosyl-L-methionine + phosphate + diphosphate. It participates in amino-acid biosynthesis; S-adenosyl-L-methionine biosynthesis; S-adenosyl-L-methionine from L-methionine: step 1/1. In terms of biological role, catalyzes the formation of S-adenosylmethionine from methionine and ATP. The reaction comprises two steps that are both catalyzed by the same enzyme: formation of S-adenosylmethionine (AdoMet) and triphosphate, and subsequent hydrolysis of the triphosphate. This chain is S-adenosylmethionine synthase 2 (SAM2), found in Solanum lycopersicum (Tomato).